The primary structure comprises 158 residues: 2-C-methyl-D-erythritol 2,4-cyclodiphosphate synthase (158 aa).

Residues D9 and H11 each coordinate a divalent metal cation. 4-CDP-2-C-methyl-D-erythritol 2-phosphate-binding positions include 9–11 (DVH) and 35–36 (HS). H43 is an a divalent metal cation binding site. 4-CDP-2-C-methyl-D-erythritol 2-phosphate-binding positions include 57–59 (DIG), 62–66 (FPDTD), 133–136 (TTTE), F140, and R143.

It belongs to the IspF family. As to quaternary structure, homotrimer. It depends on a divalent metal cation as a cofactor.

It carries out the reaction 4-CDP-2-C-methyl-D-erythritol 2-phosphate = 2-C-methyl-D-erythritol 2,4-cyclic diphosphate + CMP. It participates in isoprenoid biosynthesis; isopentenyl diphosphate biosynthesis via DXP pathway; isopentenyl diphosphate from 1-deoxy-D-xylulose 5-phosphate: step 4/6. Its function is as follows. Involved in the biosynthesis of isopentenyl diphosphate (IPP) and dimethylallyl diphosphate (DMAPP), two major building blocks of isoprenoid compounds. Catalyzes the conversion of 4-diphosphocytidyl-2-C-methyl-D-erythritol 2-phosphate (CDP-ME2P) to 2-C-methyl-D-erythritol 2,4-cyclodiphosphate (ME-CPP) with a corresponding release of cytidine 5-monophosphate (CMP). This Actinobacillus pleuropneumoniae serotype 5b (strain L20) protein is 2-C-methyl-D-erythritol 2,4-cyclodiphosphate synthase.